Here is a 950-residue protein sequence, read N- to C-terminus: Glycine dehydrogenase (decarboxylating) 1 (950 aa).

An N6-(pyridoxal phosphate)lysine modification is found at lysine 704.

Belongs to the GcvP family. In terms of assembly, the glycine cleavage system is composed of four proteins: P, T, L and H. Pyridoxal 5'-phosphate serves as cofactor.

It catalyses the reaction N(6)-[(R)-lipoyl]-L-lysyl-[glycine-cleavage complex H protein] + glycine + H(+) = N(6)-[(R)-S(8)-aminomethyldihydrolipoyl]-L-lysyl-[glycine-cleavage complex H protein] + CO2. The glycine cleavage system catalyzes the degradation of glycine. The P protein binds the alpha-amino group of glycine through its pyridoxal phosphate cofactor; CO(2) is released and the remaining methylamine moiety is then transferred to the lipoamide cofactor of the H protein. This is Glycine dehydrogenase (decarboxylating) 1 from Pseudomonas fluorescens (strain Pf0-1).